The chain runs to 137 residues: SPbeta prophage-derived disulfide bond formation protein A (137 aa).

The N-terminal stretch at 1-25 (MKKWIVLFLVLIAAAISIFVYVSTG) is a signal peptide. The Thioredoxin domain occupies 26–136 (SEKPFYNDIN…IEKFFDKNGD (111 aa)). The cysteines at positions 58 and 61 are disulfide-linked.

The protein belongs to the thioredoxin family.

The protein localises to the secreted. Unknown; dispensable for production of the lantibiotic sublancin 168 and for competence for DNA uptake. The polypeptide is SPbeta prophage-derived disulfide bond formation protein A (bdbA) (Bacillus subtilis (strain 168)).